The primary structure comprises 99 residues: Glycine-rich protein (99 aa).

The signal sequence occupies residues 1-18 (MKSMIAVLLLALVATSMA).

Belongs to the non-disulfide-bridged peptide (NDBP) superfamily. As to expression, expressed by the venom gland.

The protein localises to the secreted. This chain is Glycine-rich protein, found in Lychas mucronatus (Chinese swimming scorpion).